A 212-amino-acid chain; its full sequence is Uridine kinase (212 aa).

12–19 (GGSGGGKT) provides a ligand contact to ATP.

It belongs to the uridine kinase family.

Its subcellular location is the cytoplasm. The enzyme catalyses uridine + ATP = UMP + ADP + H(+). It carries out the reaction cytidine + ATP = CMP + ADP + H(+). It functions in the pathway pyrimidine metabolism; CTP biosynthesis via salvage pathway; CTP from cytidine: step 1/3. It participates in pyrimidine metabolism; UMP biosynthesis via salvage pathway; UMP from uridine: step 1/1. This Streptococcus pneumoniae serotype 19F (strain G54) protein is Uridine kinase.